The following is a 193-amino-acid chain: Imidazoleglycerol-phosphate dehydratase (193 aa).

It belongs to the imidazoleglycerol-phosphate dehydratase family.

It localises to the cytoplasm. The catalysed reaction is D-erythro-1-(imidazol-4-yl)glycerol 3-phosphate = 3-(imidazol-4-yl)-2-oxopropyl phosphate + H2O. The protein operates within amino-acid biosynthesis; L-histidine biosynthesis; L-histidine from 5-phospho-alpha-D-ribose 1-diphosphate: step 6/9. This Saccharolobus islandicus (strain M.16.27) (Sulfolobus islandicus) protein is Imidazoleglycerol-phosphate dehydratase.